The primary structure comprises 156 residues: Small ribosomal subunit protein uS7 (156 aa).

Belongs to the universal ribosomal protein uS7 family. Part of the 30S ribosomal subunit. Contacts proteins S9 and S11.

In terms of biological role, one of the primary rRNA binding proteins, it binds directly to 16S rRNA where it nucleates assembly of the head domain of the 30S subunit. Is located at the subunit interface close to the decoding center, probably blocks exit of the E-site tRNA. This is Small ribosomal subunit protein uS7 from Tremblaya princeps.